A 486-amino-acid chain; its full sequence is Cytochrome P450 monooxygenase aclC (486 aa).

Position 427 (Cys427) interacts with heme.

This sequence belongs to the cytochrome P450 family. Heme serves as cofactor.

Its pathway is mycotoxin biosynthesis. Its function is as follows. Cytochrome P450 monooxygenase; part of the gene cluster that mediates the biosynthesis of aspirochlorine (or antibiotic A30641), an unusual halogenated spiro compound with distinctive antifungal properties due to selective inhibition of protein biosynthesis, and which is also active against bacteria, viruses, and murine tumor cells. The non-ribosomal peptide synthetase (NRPS) aclP is responsible the formation of the diketopiperazine (DKP) core from the condensation of 2 phenylalanine residues. One Phe residue is tailored into chlorotyrosine by hydroxylation and chlorination, whereas the second Phe undergoes an unprecedented C-C bond cleavage to be converted into glycine. After formation of the DKP, sulfur is incorporated into the DKP by conjugation with glutathione by aclG, followed by its stepwise degradation to the thiol by aclI, aclJ and aclK, and the dithiol oxidation by aclT. In addition, oxygenases (aclB, aclC, aclL and aclO) and O-methyltransferases (aclM and aclU) act as tailoring enzymes to produce the intermediate dechloroaspirochlorine. Ultimately, chlorination of dechloroaspirochlorine by the halogenase aclH is the last step in the aspirochlorine pathway. This is Cytochrome P450 monooxygenase aclC from Aspergillus oryzae (strain ATCC 42149 / RIB 40) (Yellow koji mold).